We begin with the raw amino-acid sequence, 352 residues long: Keratocan (352 aa).

The signal sequence occupies residues 1–20 (MASTICFILWVVFVTDTVWT). The region spanning 33 to 71 (EDWTMHDFDCPRECFCPPSFPTALYCENRGLKEIPAIPS) is the LRRNT domain. 2 disulfides stabilise this stretch: cysteine 42/cysteine 48 and cysteine 46/cysteine 58. LRR repeat units lie at residues 72 to 93 (RIWYLYLENNLIETIPEKPFEN), 96 to 117 (QLRWINLNKNKITNYGIEKGAL), 122 to 142 (KLLFLFLEDNELEEVPSPLPR), 143 to 164 (SLEQLQLARNKVSRIPQGTFSN), 167 to 180 (NLTLLDLQHNKLLD), 193 to 214 (NLMQLNMAKNALRNMPPRLPAN), 215 to 235 (TMQVFLDNNSIEGIPENYFNV), and 238 to 258 (KVAFLRLNHNKLSDAGLPSSG). Asparagine 93 carries an N-linked (GlcNAc...) (keratan sulfate) asparagine glycan. N-linked (GlcNAc...) (keratan sulfate) asparagine glycosylation occurs at asparagine 167. N-linked (GlcNAc...) asparagine glycosylation is present at asparagine 222. N-linked (GlcNAc...) (keratan sulfate) asparagine glycosylation occurs at asparagine 260. LRR repeat units lie at residues 263-282 (SILDLQLSHNQLTKVPKISA) and 283-304 (HLQHLHLDHNKIRNVNVSVICP). A glycan (N-linked (GlcNAc...) asparagine) is linked at asparagine 298. A disulfide bond links cysteine 303 and cysteine 343.

It belongs to the small leucine-rich proteoglycan (SLRP) family. SLRP class II subfamily. Post-translationally, binds three long, highly sulfated keratan sulfate chains in the cornea but short, non-sulfated poly(N-acetyllactosamine) chains in other tissues. In terms of processing, the N-terminus is blocked. Abundant in cornea and sclera but also found in other tissues.

It localises to the secreted. The protein localises to the extracellular space. Its subcellular location is the extracellular matrix. May be important in developing and maintaining corneal transparency and for the structure of the stromal matrix. The polypeptide is Keratocan (KERA) (Bos taurus (Bovine)).